The sequence spans 108 residues: Colipase B (108 aa).

An N-terminal signal peptide occupies residues 1 to 13 (LALLLVALAVAYA). A propeptide spans 14 to 18 (VPDPR) (enterostatin, activation peptide). Disulfide bonds link Cys30–Cys41, Cys36–Cys52, Cys40–Cys74, Cys62–Cys82, and Cys76–Cys100. Residue Trp65 participates in taurodeoxycholate binding.

It belongs to the colipase family. In terms of assembly, forms a 1:1 stoichiometric complex with pancreatic lipase. Expressed by the pancreas.

The protein resides in the secreted. Its function is as follows. Colipase is a cofactor of pancreatic lipase. It allows the lipase to anchor itself to the lipid-water interface. Without colipase the enzyme is washed off by bile salts, which have an inhibitory effect on the lipase. In terms of biological role, enterostatin has a biological activity as a satiety signal. This is Colipase B (CLPS2) from Equus caballus (Horse).